The primary structure comprises 337 residues: Phenylalanine--tRNA ligase alpha subunit (337 aa).

A Mg(2+)-binding site is contributed by E258.

The protein belongs to the class-II aminoacyl-tRNA synthetase family. Phe-tRNA synthetase alpha subunit type 1 subfamily. In terms of assembly, tetramer of two alpha and two beta subunits. Requires Mg(2+) as cofactor.

The protein localises to the cytoplasm. The enzyme catalyses tRNA(Phe) + L-phenylalanine + ATP = L-phenylalanyl-tRNA(Phe) + AMP + diphosphate + H(+). The polypeptide is Phenylalanine--tRNA ligase alpha subunit (Burkholderia vietnamiensis (strain G4 / LMG 22486) (Burkholderia cepacia (strain R1808))).